The sequence spans 118 residues: NLIQFGNMIQCANKGSRPSLNYADYGCYCGWGGSGTPVDELDRCCQVHDNCYEQAGKKGCFPKLTLYSWKCTGNVPTCNSKTGCKSFVCACDAAAAKCFAKAPYKKENYNIDTKKRCK.

Cystine bridges form between cysteine 11–cysteine 71, cysteine 27–cysteine 117, cysteine 29–cysteine 45, cysteine 44–cysteine 98, cysteine 51–cysteine 91, cysteine 60–cysteine 84, and cysteine 78–cysteine 89. Residues tyrosine 28, glycine 30, and glycine 32 each contribute to the Ca(2+) site. Residue histidine 48 is part of the active site. Position 49 (aspartate 49) interacts with Ca(2+). Residue aspartate 92 is part of the active site.

This sequence belongs to the phospholipase A2 family. Group I subfamily. D49 sub-subfamily. The cofactor is Ca(2+). In terms of tissue distribution, expressed by the venom gland.

The protein localises to the secreted. The enzyme catalyses a 1,2-diacyl-sn-glycero-3-phosphocholine + H2O = a 1-acyl-sn-glycero-3-phosphocholine + a fatty acid + H(+). Functionally, PLA2 catalyzes the calcium-dependent hydrolysis of the 2-acyl groups in 3-sn-phosphoglycerides. The protein is Basic phospholipase A2 PA-12A of Pseudechis australis (Mulga snake).